Reading from the N-terminus, the 46-residue chain is uncharacterized protein (46 aa).

A helical membrane pass occupies residues 12–34 (HFNHFVIALSFIYGLTELGYLLL).

The protein resides in the cell membrane. This is an uncharacterized protein from Bacillus subtilis (strain 168).